A 107-amino-acid polypeptide reads, in one-letter code: Large ribosomal subunit protein uL23 (107 aa).

This sequence belongs to the universal ribosomal protein uL23 family. As to quaternary structure, part of the 50S ribosomal subunit. Contacts protein L29, and trigger factor when it is bound to the ribosome.

In terms of biological role, one of the early assembly proteins it binds 23S rRNA. One of the proteins that surrounds the polypeptide exit tunnel on the outside of the ribosome. Forms the main docking site for trigger factor binding to the ribosome. The polypeptide is Large ribosomal subunit protein uL23 (Gluconobacter oxydans (strain 621H) (Gluconobacter suboxydans)).